We begin with the raw amino-acid sequence, 356 residues long: tRNA N6-adenosine threonylcarbamoyltransferase (356 aa).

Fe cation is bound by residues His110 and His114. Residues 133–137, Asp166, Gly179, and Asn276 contribute to the substrate site; that span reads LVSGG. Position 304 (Asp304) interacts with Fe cation.

The protein belongs to the KAE1 / TsaD family. The cofactor is Fe(2+).

The protein localises to the cytoplasm. It catalyses the reaction L-threonylcarbamoyladenylate + adenosine(37) in tRNA = N(6)-L-threonylcarbamoyladenosine(37) in tRNA + AMP + H(+). Functionally, required for the formation of a threonylcarbamoyl group on adenosine at position 37 (t(6)A37) in tRNAs that read codons beginning with adenine. Is involved in the transfer of the threonylcarbamoyl moiety of threonylcarbamoyl-AMP (TC-AMP) to the N6 group of A37, together with TsaE and TsaB. TsaD likely plays a direct catalytic role in this reaction. This is tRNA N6-adenosine threonylcarbamoyltransferase from Teredinibacter turnerae (strain ATCC 39867 / T7901).